The following is a 311-amino-acid chain: UPF0324 membrane protein VV1_3166 (311 aa).

Transmembrane regions (helical) follow at residues 8–28, 51–71, 74–94, 106–126, 133–153, 165–185, 197–217, 228–248, 256–276, and 289–309; these read FIFA…ALVL, LLSY…AIAV, DGIG…FLVA, LISA…APAI, IALA…IFPV, FGTW…AASA, LKLA…ILFA, LVLP…DLFP, GIFS…GCSI, and LIFG…WLLL.

Belongs to the UPF0324 family.

It is found in the cell membrane. This Vibrio vulnificus (strain CMCP6) protein is UPF0324 membrane protein VV1_3166.